Consider the following 377-residue polypeptide: Dehydrogenase/reductase SDR family member 13 (377 aa).

An N-terminal signal peptide occupies residues 1-25 (MEALLLGAGLLLGAYVLVYYNLVKA). 2 residues coordinate NAD(+): S46 and I48. Position 170 (S170) interacts with substrate. Positions 197, 201, and 232 each coordinate NAD(+). The Proton acceptor role is filled by Y197. Residues 309–377 (RLAGLGPGED…AKVEPEIQLS (69 aa)) form a disordered region. The span at 317 to 331 (EDAEPDEDPQSEDSE) shows a compositional bias: acidic residues. Residues 347–357 (SQPYPSPQSSP) are compositionally biased toward low complexity. Residues 368–377 (AKVEPEIQLS) are compositionally biased toward basic and acidic residues.

The protein belongs to the short-chain dehydrogenases/reductases (SDR) family.

The protein resides in the secreted. Functionally, putative oxidoreductase. This Homo sapiens (Human) protein is Dehydrogenase/reductase SDR family member 13.